A 407-amino-acid polypeptide reads, in one-letter code: Proteasome-activating nucleotidase (407 aa).

Residues Lys-22–Ile-67 adopt a coiled-coil conformation. ATP-binding positions include Gly-192–Leu-197 and His-331. Residues Met-405–Gly-407 form a docks into pockets in the proteasome alpha-ring to cause gate opening region.

The protein belongs to the AAA ATPase family. In terms of assembly, homohexamer. The hexameric complex has a two-ring architecture resembling a top hat that caps the 20S proteasome core at one or both ends. Upon ATP-binding, the C-terminus of PAN interacts with the alpha-rings of the proteasome core by binding to the intersubunit pockets.

The protein localises to the cytoplasm. Functionally, ATPase which is responsible for recognizing, binding, unfolding and translocation of substrate proteins into the archaeal 20S proteasome core particle. Is essential for opening the gate of the 20S proteasome via an interaction with its C-terminus, thereby allowing substrate entry and access to the site of proteolysis. Thus, the C-termini of the proteasomal ATPase function like a 'key in a lock' to induce gate opening and therefore regulate proteolysis. Unfolding activity requires energy from ATP hydrolysis, whereas ATP binding alone promotes ATPase-20S proteasome association which triggers gate opening, and supports translocation of unfolded substrates. This is Proteasome-activating nucleotidase from Methanococcus maripaludis (strain C6 / ATCC BAA-1332).